An 806-amino-acid polypeptide reads, in one-letter code: Centrosomal protein of 85 kDa-like (806 aa).

Disordered regions lie at residues 1 to 27 (MWGRFLAPEAGGRDSPSGARSFPAGSD), 51 to 89 (NNHLRRHSITSDSGDTGIGTSCSDSVEDHSTSSGTLSFK), and 101 to 146 (HVMP…SSLD). Serine 15 carries the post-translational modification Phosphoserine. A compositionally biased stretch (polar residues) spans 60 to 74 (TSDSGDTGIGTSCSD). Residues 135-146 (DHSRGERDSSLD) show a composition bias toward basic and acidic residues. The residue at position 207 (serine 207) is a Phosphoserine. The segment at 308–353 (PLEGRTTDDSYSLAPWQQPQTEEFQQGSETPMQVLTGSSRQSYSPP) is disordered. Residues 322–351 (PWQQPQTEEFQQGSETPMQVLTGSSRQSYS) are compositionally biased toward polar residues. Positions 442–644 (QEELEQKLAS…ILEIQSMQGK (203 aa)) form a coiled coil.

It belongs to the CEP85 family.

It localises to the cytoplasm. The protein localises to the cytoskeleton. The protein resides in the microtubule organizing center. It is found in the centrosome. Plays an essential role in neuronal cell migration. This is Centrosomal protein of 85 kDa-like from Mus musculus (Mouse).